The primary structure comprises 321 residues: G-protein coupled receptor homolog ECRF3 (321 aa).

Residues 1–34 (MEVKLDFSSEDFSNYSYNYSGDIYYGDVAPCVVN) are Extracellular-facing. N-linked (GlcNAc...) asparagine; by host glycosylation is found at Asn14 and Asn18. A helical membrane pass occupies residues 35–51 (FLISESALAFIYVLMFL). Residues 52-76 (CNAIGNSLVLRTFLKYRAQAQSFDY) are Cytoplasmic-facing. A helical membrane pass occupies residues 77–93 (LMMGFCLNSLFLAGYLL). Residues 94 to 124 (MRLLRMFEIFMNTELCKLEAFFLNLSIYWSP) are Extracellular-facing. N-linked (GlcNAc...) asparagine; by host glycosylation occurs at Asn117. The chain crosses the membrane as a helical span at residues 125–141 (FILVFISVLRCLLIFCA). Residues 142 to 149 (TRLWVKKT) are Cytoplasmic-facing. The helical transmembrane segment at 150–166 (LIGQVFLCCSFVLACFG) threads the bilayer. The Extracellular segment spans residues 167-196 (ALPHVMVTSYYEPSSCIEEDGVLTEQLRTK). A helical transmembrane segment spans residues 197 to 215 (LNTFHTWYSFAGPLFITVI). Residues 216–234 (CYSMSCYKLFKTKLSKRAE) are Cytoplasmic-facing. Residues 235-251 (VVTIITMTTLLFIVFCI) traverse the membrane as a helical segment. The Extracellular portion of the chain corresponds to 252–286 (PYYIMESIDTLLRVGVIEETCAKRSAIVYGIQCTY). The helical transmembrane segment at 287-303 (MLLVLYYCMLPLMFAMF) threads the bilayer. Topologically, residues 304–321 (GSLFRQRMAAWCKTICHC) are cytoplasmic.

This sequence belongs to the G-protein coupled receptor 1 family.

It is found in the host cell membrane. Functionally, may be highly relevant to the process of cellular transformation and rapid T-cell proliferation effected by HVS during latent infections of T-cells in susceptible hosts. The chain is G-protein coupled receptor homolog ECRF3 (74) from Saimiri sciureus (Common squirrel monkey).